We begin with the raw amino-acid sequence, 246 residues long: Carboxy-S-adenosyl-L-methionine synthase (246 aa).

Residues Y39, 64–66 (GCS), 89–90 (DN), 121–122 (DI), N136, and R203 contribute to the S-adenosyl-L-methionine site.

This sequence belongs to the class I-like SAM-binding methyltransferase superfamily. Cx-SAM synthase family. Homodimer.

It carries out the reaction prephenate + S-adenosyl-L-methionine = carboxy-S-adenosyl-L-methionine + 3-phenylpyruvate + H2O. Functionally, catalyzes the conversion of S-adenosyl-L-methionine (SAM) to carboxy-S-adenosyl-L-methionine (Cx-SAM). This chain is Carboxy-S-adenosyl-L-methionine synthase, found in Pseudomonas aeruginosa (strain UCBPP-PA14).